The sequence spans 67 residues: Conotoxin Cl6.8 (67 aa).

The signal sequence occupies residues 1 to 22 (MKVTAVLMVAVLVLTACQLTTA). Residues 23–39 (NTTDYVRRILARKSTMS) constitute a propeptide that is removed on maturation. 3 disulfide bridges follow: Cys-43-Cys-58, Cys-50-Cys-62, and Cys-57-Cys-66. A Cysteine amide modification is found at Cys-66.

This sequence belongs to the conotoxin O1 superfamily. As to expression, expressed by the venom duct.

Its subcellular location is the secreted. The polypeptide is Conotoxin Cl6.8 (Californiconus californicus (California cone)).